A 538-amino-acid polypeptide reads, in one-letter code: Syncytin-1 (538 aa).

A signal peptide spans 1-20; sequence MALPYHIFLFTVLLPSFTLT. Topologically, residues 21-443 are extracellular; the sequence is APPPCRCMTS…NIGPWGLFSQ (423 aa). An N-linked (GlcNAc...) asparagine glycan is attached at N169. The CXXC signature appears at 186–189; sequence CWMC. 3 cysteine pairs are disulfide-bonded: C186-C189, C186-C405, and C397-C404. 6 N-linked (GlcNAc...) asparagine glycosylation sites follow: N208, N214, N234, N242, N245, and N281. Residues 320-340 form a fusion peptide region; sequence ILPFVMAAGVLGALGTGIGGI. The immunosuppression stretch occupies residues 380–396; sequence LQNRRALDLLTAERGGT. The CX6CC signature appears at 397 to 405; it reads CLFLGEECC. N409 is a glycosylation site (N-linked (GlcNAc...) asparagine). Residues 444-464 form a helical membrane-spanning segment; sequence WMPWILPFLGPLAAIILLLLF. The interval 465-484 is essential for the fusiogenic function; it reads GPCIFNLLVNFVSSRIEAVK. At 465–538 the chain is on the cytoplasmic side; it reads GPCIFNLLVN…LLRPNSAGSS (74 aa). Residues 501 to 538 are disordered; it reads PLDWPASPRSDVNDIKGTPPEEISTAQPLLRPNSAGSS.

This sequence belongs to the gamma type-C retroviral envelope protein family. HERV class-I W env subfamily. The mature envelope protein (Env) consists of a trimer of SU-TM heterodimers attached probably by a labile interchain disulfide bond. Interacts with the C-type lectin CD209/DC-SIGN. Post-translationally, specific enzymatic cleavages in vivo yield mature proteins. Envelope glycoproteins are synthesized as an inactive precursor that is heavily N-glycosylated and processed likely by furin in the Golgi to yield the mature SU and TM proteins. The cleavage site between SU and TM requires the minimal sequence [KR]-X-[KR]-R. The CXXC motif is highly conserved across a broad range of retroviral envelope proteins. It is thought to participate in the formation of a labile disulfide bond possibly with the CX6CC motif present in the transmembrane protein.

The protein localises to the cell membrane. The protein resides in the virion. This endogenous retroviral envelope protein has retained its original fusogenic properties and participates in trophoblast fusion and the formation of a syncytium during placenta morphogenesis. May recognize and induce fusion through binding of SLC1A4 and SLC1A5. In terms of biological role, endogenous envelope proteins may have kept, lost or modified their original function during evolution. Retroviral envelope proteins mediate receptor recognition and membrane fusion during early infection. The surface protein (SU) mediates receptor recognition, while the transmembrane protein (TM) acts as a class I viral fusion protein. The protein may have at least 3 conformational states: pre-fusion native state, pre-hairpin intermediate state, and post-fusion hairpin state. During viral and target cell membrane fusion, the coiled coil regions (heptad repeats) assume a trimer-of-hairpins structure, positioning the fusion peptide in close proximity to the C-terminal region of the ectodomain. The formation of this structure appears to drive apposition and subsequent fusion of membranes. The chain is Syncytin-1 (ERVW-1) from Pongo pygmaeus (Bornean orangutan).